Here is a 166-residue protein sequence, read N- to C-terminus: Putative pre-16S rRNA nuclease (166 aa).

It belongs to the YqgF nuclease family.

Its subcellular location is the cytoplasm. Could be a nuclease involved in processing of the 5'-end of pre-16S rRNA. The chain is Putative pre-16S rRNA nuclease from Mesorhizobium japonicum (strain LMG 29417 / CECT 9101 / MAFF 303099) (Mesorhizobium loti (strain MAFF 303099)).